A 356-amino-acid chain; its full sequence is Cytochrome c oxidase subunit 2 (356 aa).

The first 23 residues, Met-1–Gly-23, serve as a signal peptide directing secretion. The cytochrome c oxidase subunit II stretch occupies residues Cys-24–Asp-259. 2 helical membrane passes run Leu-45–Val-65 and Ile-93–Thr-113. Residues His-178, Cys-219, Cys-223, and His-227 each coordinate Cu cation. Residues Pro-260–Glu-356 enclose the Cytochrome c domain. Cys-273, Cys-276, His-277, and Met-331 together coordinate heme c.

The protein belongs to the cytochrome c oxidase subunit 2 family. The cofactor is Cu cation. It depends on heme c as a cofactor.

It localises to the cell membrane. The catalysed reaction is 4 Fe(II)-[cytochrome c] + O2 + 8 H(+)(in) = 4 Fe(III)-[cytochrome c] + 2 H2O + 4 H(+)(out). Subunits I and II form the functional core of the enzyme complex. Electrons originating in cytochrome c are transferred via heme a and Cu(A) to the binuclear center formed by heme a3 and Cu(B). This is Cytochrome c oxidase subunit 2 (ctaC) from Bacillus sp. (strain PS3).